We begin with the raw amino-acid sequence, 126 residues long: Major sperm protein 1 (126 aa).

The residue at position 2 (Ala-2) is an N-acetylalanine. Positions Asp-8 to Asn-125 constitute an MSP domain.

Sperm.

Its subcellular location is the cell projection. The protein localises to the pseudopodium. The protein resides in the cytoplasm. It localises to the cytoskeleton. Its function is as follows. Central component in molecular interactions underlying sperm crawling. Forms an extensive filament system that extends from sperm villipoda, along the leading edge of the pseudopod. This Globodera rostochiensis (Golden nematode worm) protein is Major sperm protein 1 (MSP-1).